Here is a 436-residue protein sequence, read N- to C-terminus: Testican-3 (436 aa).

A signal peptide spans 1–22 (MLKVSAVLCVCAAAWCSQSLAA). Intrachain disulfides connect Cys90–Cys101, Cys95–Cys111, Cys139–Cys169, Cys142–Cys162, Cys151–Cys183, Cys317–Cys341, Cys352–Cys359, and Cys361–Cys380. The region spanning 133–185 (GPILSTCKQCPVVYPSPVCGSDGHTYSFQCKLEYQACVLGKQISVKCEGHCPC) is the Kazal-like domain. A Thyroglobulin type-1 domain is found at 314–380 (DPPCQTELSN…GSRINGVADC (67 aa)). 2 O-linked (Xyl...) (glycosaminoglycan) serine glycosylation sites follow: Ser387 and Ser392. The disordered stretch occupies residues 393-436 (GDFHEWTDDEDDEDDIMNDEDEIEDDDEDEGDDDDGGDDHDGYI). Positions 399 to 430 (TDDEDDEDDIMNDEDEIEDDDEDEGDDDDGGD) are enriched in acidic residues.

In terms of processing, contains chondroitin sulfate and heparan sulfate O-linked oligosaccharides. In terms of tissue distribution, expressed in brain.

It localises to the secreted. Its subcellular location is the extracellular space. It is found in the extracellular matrix. Its function is as follows. May participate in diverse steps of neurogenesis. Inhibits the processing of pro-matrix metalloproteinase 2 (MMP-2) by MT1-MMP and MT3-MMP. May interfere with tumor invasion. The chain is Testican-3 (SPOCK3) from Pongo abelii (Sumatran orangutan).